The chain runs to 424 residues: Glutamate-1-semialdehyde 2,1-aminomutase (424 aa).

An N6-(pyridoxal phosphate)lysine modification is found at lysine 266.

It belongs to the class-III pyridoxal-phosphate-dependent aminotransferase family. HemL subfamily. As to quaternary structure, homodimer. It depends on pyridoxal 5'-phosphate as a cofactor.

The protein resides in the cytoplasm. The catalysed reaction is (S)-4-amino-5-oxopentanoate = 5-aminolevulinate. The protein operates within porphyrin-containing compound metabolism; protoporphyrin-IX biosynthesis; 5-aminolevulinate from L-glutamyl-tRNA(Glu): step 2/2. In Azoarcus sp. (strain BH72), this protein is Glutamate-1-semialdehyde 2,1-aminomutase.